A 184-amino-acid chain; its full sequence is UPS-like protein C36.10 (184 aa).

Residues 1–172 form the PRELI/MSF1 domain; that stretch reads MKIFESCHLF…VLEKINMSVF (172 aa).

The protein belongs to the slowmo family.

The protein localises to the cytoplasm. It is found in the mitochondrion inner membrane. It localises to the mitochondrion intermembrane space. Required for mitochondrial morphology. May control phospholipid metabolism in the mitochondrial intermembrane space. The polypeptide is UPS-like protein C36.10 (Schizosaccharomyces pombe (strain 972 / ATCC 24843) (Fission yeast)).